The following is a 368-amino-acid chain: tRNA-specific 2-thiouridylase MnmA (368 aa).

ATP contacts are provided by residues 12–19 (GMSGGVDS) and M38. An interaction with target base in tRNA region spans residues 98–100 (NPD). The active-site Nucleophile is C103. The cysteines at positions 103 and 200 are disulfide-linked. G128 serves as a coordination point for ATP. The interval 150 to 152 (KDQ) is interaction with tRNA. C200 functions as the Cysteine persulfide intermediate in the catalytic mechanism. An interaction with tRNA region spans residues 311-312 (RY).

The protein belongs to the MnmA/TRMU family.

It is found in the cytoplasm. It catalyses the reaction S-sulfanyl-L-cysteinyl-[protein] + uridine(34) in tRNA + AH2 + ATP = 2-thiouridine(34) in tRNA + L-cysteinyl-[protein] + A + AMP + diphosphate + H(+). Its function is as follows. Catalyzes the 2-thiolation of uridine at the wobble position (U34) of tRNA, leading to the formation of s(2)U34. The protein is tRNA-specific 2-thiouridylase MnmA of Aeromonas salmonicida (strain A449).